We begin with the raw amino-acid sequence, 591 residues long: L-fucose isomerase (591 aa).

Residues Glu-337 and Asp-361 each act as proton acceptor in the active site. Mn(2+) contacts are provided by Glu-337, Asp-361, and His-528.

The protein belongs to the L-fucose isomerase family. Homohexamer. The cofactor is Mn(2+).

Its subcellular location is the cytoplasm. The enzyme catalyses L-fucose = L-fuculose. It participates in carbohydrate degradation; L-fucose degradation; L-lactaldehyde and glycerone phosphate from L-fucose: step 1/3. Functionally, converts the aldose L-fucose into the corresponding ketose L-fuculose. This is L-fucose isomerase from Escherichia coli O6:K15:H31 (strain 536 / UPEC).